The sequence spans 463 residues: Fumarate hydratase class II (463 aa).

Substrate is bound by residues 97 to 99, 128 to 131, 138 to 140, and Thr-186; these read SGT, HPND, and SSN. His-187 acts as the Proton donor/acceptor in catalysis. Residue Ser-317 is part of the active site. Substrate contacts are provided by residues Ser-318 and 323 to 325; that span reads KVN.

It belongs to the class-II fumarase/aspartase family. Fumarase subfamily. Homotetramer.

It is found in the cytoplasm. It carries out the reaction (S)-malate = fumarate + H2O. It functions in the pathway carbohydrate metabolism; tricarboxylic acid cycle; (S)-malate from fumarate: step 1/1. Its function is as follows. Involved in the TCA cycle. Catalyzes the stereospecific interconversion of fumarate to L-malate. This Campylobacter jejuni subsp. jejuni serotype O:2 (strain ATCC 700819 / NCTC 11168) protein is Fumarate hydratase class II.